A 254-amino-acid chain; its full sequence is Putative cysteine-rich repeat secretory protein 37 (254 aa).

The signal sequence occupies residues 1 to 29 (MYSSYSLSKRLVSIPILAIQLLLIRSVSS). 2 Gnk2-homologous domains span residues 36–138 (YLNH…SIRS) and 145–251 (YRNV…LYPF).

Belongs to the cysteine-rich repeat secretory protein family.

It is found in the secreted. This chain is Putative cysteine-rich repeat secretory protein 37 (CRRSP37), found in Arabidopsis thaliana (Mouse-ear cress).